Reading from the N-terminus, the 513-residue chain is GMP synthase [glutamine-hydrolyzing] (513 aa).

In terms of domain architecture, Glutamine amidotransferase type-1 spans 9 to 198 (LILVLDFGSQ…VRRVCNCTGE (190 aa)). Cysteine 86 functions as the Nucleophile in the catalytic mechanism. Catalysis depends on residues histidine 172 and glutamate 174. Residues 199–388 (WTMENFIEIE…LGIPEHLVWR (190 aa)) enclose the GMPS ATP-PPase domain. 226-232 (SGGVDSS) is an ATP binding site.

In terms of assembly, homodimer.

It catalyses the reaction XMP + L-glutamine + ATP + H2O = GMP + L-glutamate + AMP + diphosphate + 2 H(+). Its pathway is purine metabolism; GMP biosynthesis; GMP from XMP (L-Gln route): step 1/1. Its function is as follows. Catalyzes the synthesis of GMP from XMP. The polypeptide is GMP synthase [glutamine-hydrolyzing] (Staphylococcus epidermidis (strain ATCC 12228 / FDA PCI 1200)).